Reading from the N-terminus, the 450-residue chain is Bifunctional protein GlmU (450 aa).

The segment at 1–226 (MLAVAVLAAG…PDEVNGINNR (226 aa)) is pyrophosphorylase. Residues 7–10 (LAAG), K21, Q73, and 78–79 (GT) contribute to the UDP-N-acetyl-alpha-D-glucosamine site. D103 is a Mg(2+) binding site. Positions 140, 155, 170, and 224 each coordinate UDP-N-acetyl-alpha-D-glucosamine. N224 contributes to the Mg(2+) binding site. Positions 227–247 (QQLAQCETMLQERLRHHWMAE) are linker. Residues 248–450 (GVTFVDPASC…IKENWAGPQG (203 aa)) are N-acetyltransferase. Positions 329 and 347 each coordinate UDP-N-acetyl-alpha-D-glucosamine. H359 (proton acceptor) is an active-site residue. Residues Y362 and N373 each contribute to the UDP-N-acetyl-alpha-D-glucosamine site. Acetyl-CoA-binding positions include A376, 382–383 (NY), A419, and R436.

It in the N-terminal section; belongs to the N-acetylglucosamine-1-phosphate uridyltransferase family. This sequence in the C-terminal section; belongs to the transferase hexapeptide repeat family. In terms of assembly, homotrimer. It depends on Mg(2+) as a cofactor.

Its subcellular location is the cytoplasm. It carries out the reaction alpha-D-glucosamine 1-phosphate + acetyl-CoA = N-acetyl-alpha-D-glucosamine 1-phosphate + CoA + H(+). The catalysed reaction is N-acetyl-alpha-D-glucosamine 1-phosphate + UTP + H(+) = UDP-N-acetyl-alpha-D-glucosamine + diphosphate. The protein operates within nucleotide-sugar biosynthesis; UDP-N-acetyl-alpha-D-glucosamine biosynthesis; N-acetyl-alpha-D-glucosamine 1-phosphate from alpha-D-glucosamine 6-phosphate (route II): step 2/2. It functions in the pathway nucleotide-sugar biosynthesis; UDP-N-acetyl-alpha-D-glucosamine biosynthesis; UDP-N-acetyl-alpha-D-glucosamine from N-acetyl-alpha-D-glucosamine 1-phosphate: step 1/1. It participates in bacterial outer membrane biogenesis; LPS lipid A biosynthesis. Its function is as follows. Catalyzes the last two sequential reactions in the de novo biosynthetic pathway for UDP-N-acetylglucosamine (UDP-GlcNAc). The C-terminal domain catalyzes the transfer of acetyl group from acetyl coenzyme A to glucosamine-1-phosphate (GlcN-1-P) to produce N-acetylglucosamine-1-phosphate (GlcNAc-1-P), which is converted into UDP-GlcNAc by the transfer of uridine 5-monophosphate (from uridine 5-triphosphate), a reaction catalyzed by the N-terminal domain. The protein is Bifunctional protein GlmU of Synechococcus sp. (strain RCC307).